The primary structure comprises 264 residues: tRNA pseudouridine synthase A (264 aa).

Catalysis depends on Asp51, which acts as the Nucleophile. Substrate is bound at residue Tyr109.

This sequence belongs to the tRNA pseudouridine synthase TruA family. Homodimer.

The catalysed reaction is uridine(38/39/40) in tRNA = pseudouridine(38/39/40) in tRNA. In terms of biological role, formation of pseudouridine at positions 38, 39 and 40 in the anticodon stem and loop of transfer RNAs. The polypeptide is tRNA pseudouridine synthase A (Vibrio cholerae serotype O1 (strain ATCC 39541 / Classical Ogawa 395 / O395)).